We begin with the raw amino-acid sequence, 342 residues long: Putative TPR repeat-containing protein R856 (342 aa).

7 TPR repeats span residues 36-69 (VHIF…IFNG), 77-110 (FYSV…IKDM), 119-152 (VYAL…NEKL), 161-194 (AFVL…YREK), 203-236 (AFTI…FNKI), 245-278 (AFSL…YKNV), and 291-324 (ASCL…FEST).

This Acanthamoeba polyphaga mimivirus (APMV) protein is Putative TPR repeat-containing protein R856.